The following is a 383-amino-acid chain: MTAPAELSPTLQLACDLIRRPSVTPVDADCQAQMMNRLGAVGFQLEPMRIEDVDNFWATHGSQDGPVLCFAGHTDVVPTGPVQQWQHEPFEALIDADGMLCGRGAADMKGSLASMVIASERFVQDYPNHRGKVAFLITSDEEGPAHHGTKAVVERLKARNERLDWCIVGEPSSTTLLGDVVKNGRRGSLGAKLTIRGKQGHVAYPHLARNPIHLAAPALAELAAEHWDEGNAFFPPTSFQISNLNSGTGATNVVPGELTALFNFRFSTESTVEGLQARVSAILDKHELDWSVDWALSGLPFLTEPGELLDAVAASIKGVTGRDTQPSTSGGTSDGRFIATMGTQVVELGPVNATIHQVDERILASDLDLLTEIYYQTLVRLLA.

H73 contributes to the Zn(2+) binding site. D75 is an active-site residue. Zn(2+) is bound at residue D107. E141 serves as the catalytic Proton acceptor. Zn(2+) contacts are provided by E142, E170, and H356.

Belongs to the peptidase M20A family. DapE subfamily. Homodimer. The cofactor is Zn(2+). Co(2+) serves as cofactor.

The catalysed reaction is N-succinyl-(2S,6S)-2,6-diaminopimelate + H2O = (2S,6S)-2,6-diaminopimelate + succinate. It participates in amino-acid biosynthesis; L-lysine biosynthesis via DAP pathway; LL-2,6-diaminopimelate from (S)-tetrahydrodipicolinate (succinylase route): step 3/3. In terms of biological role, catalyzes the hydrolysis of N-succinyl-L,L-diaminopimelic acid (SDAP), forming succinate and LL-2,6-diaminopimelate (DAP), an intermediate involved in the bacterial biosynthesis of lysine and meso-diaminopimelic acid, an essential component of bacterial cell walls. This is Succinyl-diaminopimelate desuccinylase from Pseudomonas putida (strain ATCC 700007 / DSM 6899 / JCM 31910 / BCRC 17059 / LMG 24140 / F1).